The sequence spans 313 residues: Interferon-inducible double-stranded RNA-dependent protein kinase activator A (313 aa).

Residues 1-21 are disordered; the sequence is MSQSRHRAAAPPMEREDSGTF. 3 sufficient for self-association and interaction with TARBP2 regions span residues 1-103, 102-195, and 195-313; these read MSQS…KANA, NASI…FSNI, and ISPE…AERK. The residue at position 18 (S18) is a Phosphoserine. 3 consecutive DRBM domains span residues 34 to 101, 126 to 194, and 240 to 308; these read TPIQ…ILKA, NPIG…KFSN, and DYIQ…YLKI. S167, S246, and S287 each carry phosphoserine.

It belongs to the PRKRA family. Homodimer. Interacts with EIF2AK2/PKR through its DRBM domains. Interacts with DICER1, AGO2 and TARBP2. Also able to interact with dsRNA. Interacts with UBC9. Forms a complex with UBC9 and p53/TP53. Interacts with DUS2L (via DRBM domain). In terms of processing, phosphorylated at Ser-246 in unstressed cells and at Ser-287 in stressed cells. Phosphorylation at Ser-246 appears to be a prerequisite for subsequent phosphorylation at Ser-287. Phosphorylation at Ser-246 and Ser-287 are necessary for activation of EIF2AK2/PKR under conditions of stress.

The protein resides in the cytoplasm. The protein localises to the perinuclear region. Functionally, activates EIF2AK2/PKR in the absence of double-stranded RNA (dsRNA), leading to phosphorylation of EIF2S1/EFI2-alpha and inhibition of translation and induction of apoptosis. Required for siRNA production by DICER1 and for subsequent siRNA-mediated post-transcriptional gene silencing. Does not seem to be required for processing of pre-miRNA to miRNA by DICER1. Promotes UBC9-p53/TP53 association and sumoylation and phosphorylation of p53/TP53 at 'Lys-386' at 'Ser-392' respectively and enhances its activity in a EIF2AK2/PKR-dependent manner. The polypeptide is Interferon-inducible double-stranded RNA-dependent protein kinase activator A (PRKRA) (Bos taurus (Bovine)).